The sequence spans 162 residues: Catabolic 3-dehydroquinase (162 aa).

Residue Tyr-24 is the Proton acceptor of the active site. Substrate is bound by residues Asn-88, His-94, and Asp-101. His-114 serves as the catalytic Proton donor. Substrate contacts are provided by residues Val-115–Ser-116 and Arg-125.

Belongs to the type-II 3-dehydroquinase family. Homododecamer. Adopts a ring-like structure, composed of an arrangement of two hexameric rings stacked on top of one another.

The catalysed reaction is 3-dehydroquinate = 3-dehydroshikimate + H2O. It participates in aromatic compound metabolism; 3,4-dihydroxybenzoate biosynthesis; 3,4-dihydroxybenzoate from 3-dehydroquinate: step 1/2. Its function is as follows. Is involved in the catabolism of quinate. Allows the utilization of quinate as carbon source via the beta-ketoadipate pathway. This is Catabolic 3-dehydroquinase from Podospora anserina (strain S / ATCC MYA-4624 / DSM 980 / FGSC 10383) (Pleurage anserina).